The primary structure comprises 756 residues: Serine/threonine-protein kinase DCLK1 (756 aa).

S32 and S36 each carry phosphoserine. The residue at position 46 (T46) is a Phosphothreonine. Doublecortin domains lie at 57–143 (KKVR…LEYT) and 186–269 (KLVT…QDDF). Positions 288–393 (ASASRRGTTK…QRGWRREESE (106 aa)) are disordered. Residues 297-313 (KSPGPSRRSKSPASTSS) show a composition bias toward low complexity. S305, S307, S330, S332, S334, S337, S347, S352, S353, S355, S358, C362, and S364 each carry phosphoserine. Residues 347–364 (SQHGGSSTSLSSTKVCSS) are compositionally biased toward low complexity. A compositionally biased stretch (acidic residues) spans 366-375 (DENDGPGEGD). The residue at position 392 (S392) is a Phosphoserine. The region spanning 406–663 (YKVGRTIGDG…AVQVLEHPWV (258 aa)) is the Protein kinase domain. Residues 412–420 (IGDGNFAVV) and K435 each bind ATP. D527 serves as the catalytic Proton acceptor. Y536 carries the post-translational modification Phosphotyrosine. Residues 711-723 (QVFRRRRNQDVRS) show a composition bias toward basic and acidic residues. Residues 711-756 (QVFRRRRNQDVRSRYKAQPAPPELNSESEDYSPSSSETVRSPNSPF) form a disordered region. Phosphoserine occurs at positions 742, 751, and 754.

This sequence belongs to the protein kinase superfamily. CAMK Ser/Thr protein kinase family. CaMK subfamily.

It catalyses the reaction L-seryl-[protein] + ATP = O-phospho-L-seryl-[protein] + ADP + H(+). It carries out the reaction L-threonyl-[protein] + ATP = O-phospho-L-threonyl-[protein] + ADP + H(+). Its function is as follows. Probable kinase that may be involved in a calcium-signaling pathway controlling neuronal migration in the developing brain. May also participate in functions of the mature nervous system. The polypeptide is Serine/threonine-protein kinase DCLK1 (Dclk1) (Mus musculus (Mouse)).